Reading from the N-terminus, the 1034-residue chain is FERM domain-containing protein 4B (1034 aa).

In terms of domain architecture, FERM spans 59–361 (RHCQVHLLDD…SQHQFYLDRK (303 aa)). A Phosphoserine modification is found at S372. Coiled coils occupy residues 417–450 (EVSE…ELKK) and 531–561 (KKKR…RCGK). The tract at residues 542–971 (MKKLQEIENA…TQLTIGLSDY (430 aa)) is necessary for adherens junction and tight junction localization. Positions 576 to 589 (PSESSSLSDTTTYD) are enriched in low complexity. Disordered stretches follow at residues 576 to 614 (PSES…ILPP), 635 to 698 (DTRQ…LESQ), 712 to 735 (FSLS…YTSQ), and 752 to 786 (TTQT…AQKD). S608 is modified (phosphoserine). 2 stretches are compositionally biased toward polar residues: residues 635 to 650 (DTRQ…SSPY) and 663 to 674 (MPTTPVLTRNAY). A compositionally biased stretch (low complexity) spans 675-685 (SSSHLEPESSS). S697 is modified (phosphoserine). Residues 713-722 (SLSKSQRSSS) are compositionally biased toward low complexity. A compositionally biased stretch (polar residues) spans 769–781 (QNVSTSNSGSMPN). K882 is covalently cross-linked (Glycyl lysine isopeptide (Lys-Gly) (interchain with G-Cter in SUMO2)). Disordered stretches follow at residues 905–925 (RASG…SDRG) and 1004–1034 (DGTD…GTLV). A compositionally biased stretch (polar residues) spans 906–920 (ASGQKDQGHSPQTSF). S915 carries the phosphoserine modification. Over residues 1018–1034 (SEQRLFWHEDSKPGTLV) the composition is skewed to basic and acidic residues. K1029 is covalently cross-linked (Glycyl lysine isopeptide (Lys-Gly) (interchain with G-Cter in SUMO2)).

In terms of assembly, interacts with CYTH3. Interacts with PARD3. Interacts with CYTH1.

The protein resides in the cytoplasm. It localises to the cytoskeleton. The protein localises to the cell junction. Its subcellular location is the tight junction. It is found in the adherens junction. Its function is as follows. Member of GRP1 signaling complexes that are acutely recruited to plasma membrane ruffles in response to insulin receptor signaling. May function as a scaffolding protein that regulates epithelial cell polarity by connecting ARF6 activation with the PAR3 complex. Plays a redundant role with FRMD4A in epithelial polarization. This Homo sapiens (Human) protein is FERM domain-containing protein 4B.